Reading from the N-terminus, the 100-residue chain is uncharacterized protein (100 aa).

The signal sequence occupies residues Met-1 to Gly-17. Cys-18 carries N-palmitoyl cysteine lipidation. Cys-18 carries the S-diacylglycerol cysteine lipid modification.

It is found in the cell membrane. This is an uncharacterized protein from Salmonella paratyphi A (strain ATCC 9150 / SARB42).